Consider the following 367-residue polypeptide: Serine O-succinyltransferase (367 aa).

Residues 41–351 (NAVLILTGLS…SPQGHDAFLV (311 aa)) enclose the AB hydrolase-1 domain. Residues 48 to 51 (GLSP) form an important for substrate specificity region. Serine 146 serves as the catalytic Nucleophile. Arginine 215 contacts substrate. Active-site residues include aspartate 313 and histidine 346. Aspartate 347 serves as a coordination point for substrate.

The protein belongs to the AB hydrolase superfamily. MetX family. As to quaternary structure, homodimer.

The protein localises to the cytoplasm. It catalyses the reaction succinyl-CoA + L-serine = O-succinyl-L-serine + CoA. It carries out the reaction L-homoserine + succinyl-CoA = O-succinyl-L-homoserine + CoA. It participates in amino-acid biosynthesis; L-cysteine biosynthesis; L-cysteine from L-serine: step 1/2. Functionally, transfers a succinyl group from succinyl-CoA to L-serine, forming succinyl-L-serine. In vitro, also has homoserine succinyl transferase activity. In Frateuria aurantia (strain ATCC 33424 / DSM 6220 / KCTC 2777 / LMG 1558 / NBRC 3245 / NCIMB 13370) (Acetobacter aurantius), this protein is Serine O-succinyltransferase.